Here is a 419-residue protein sequence, read N- to C-terminus: ATP phosphoribosyltransferase regulatory subunit (419 aa).

This sequence belongs to the class-II aminoacyl-tRNA synthetase family. HisZ subfamily. Heteromultimer composed of HisG and HisZ subunits.

The protein localises to the cytoplasm. It functions in the pathway amino-acid biosynthesis; L-histidine biosynthesis; L-histidine from 5-phospho-alpha-D-ribose 1-diphosphate: step 1/9. In terms of biological role, required for the first step of histidine biosynthesis. May allow the feedback regulation of ATP phosphoribosyltransferase activity by histidine. This is ATP phosphoribosyltransferase regulatory subunit from Ruminiclostridium cellulolyticum (strain ATCC 35319 / DSM 5812 / JCM 6584 / H10) (Clostridium cellulolyticum).